A 483-amino-acid chain; its full sequence is UDP-N-acetylmuramoylalanine--D-glutamate ligase (483 aa).

119–125 (GTNGKTT) provides a ligand contact to ATP.

This sequence belongs to the MurCDEF family.

Its subcellular location is the cytoplasm. It carries out the reaction UDP-N-acetyl-alpha-D-muramoyl-L-alanine + D-glutamate + ATP = UDP-N-acetyl-alpha-D-muramoyl-L-alanyl-D-glutamate + ADP + phosphate + H(+). Its pathway is cell wall biogenesis; peptidoglycan biosynthesis. Cell wall formation. Catalyzes the addition of glutamate to the nucleotide precursor UDP-N-acetylmuramoyl-L-alanine (UMA). In Mycolicibacterium vanbaalenii (strain DSM 7251 / JCM 13017 / BCRC 16820 / KCTC 9966 / NRRL B-24157 / PYR-1) (Mycobacterium vanbaalenii), this protein is UDP-N-acetylmuramoylalanine--D-glutamate ligase.